Here is a 156-residue protein sequence, read N- to C-terminus: ATP synthase subunit b (156 aa).

A helical membrane pass occupies residues 4-26; the sequence is GATFWGPMISFALFVWFTMKFVW.

It belongs to the ATPase B chain family. In terms of assembly, F-type ATPases have 2 components, F(1) - the catalytic core - and F(0) - the membrane proton channel. F(1) has five subunits: alpha(3), beta(3), gamma(1), delta(1), epsilon(1). F(0) has three main subunits: a(1), b(2) and c(10-14). The alpha and beta chains form an alternating ring which encloses part of the gamma chain. F(1) is attached to F(0) by a central stalk formed by the gamma and epsilon chains, while a peripheral stalk is formed by the delta and b chains.

Its subcellular location is the cell inner membrane. Functionally, f(1)F(0) ATP synthase produces ATP from ADP in the presence of a proton or sodium gradient. F-type ATPases consist of two structural domains, F(1) containing the extramembraneous catalytic core and F(0) containing the membrane proton channel, linked together by a central stalk and a peripheral stalk. During catalysis, ATP synthesis in the catalytic domain of F(1) is coupled via a rotary mechanism of the central stalk subunits to proton translocation. In terms of biological role, component of the F(0) channel, it forms part of the peripheral stalk, linking F(1) to F(0). The protein is ATP synthase subunit b of Halorhodospira halophila (strain DSM 244 / SL1) (Ectothiorhodospira halophila (strain DSM 244 / SL1)).